Reading from the N-terminus, the 202-residue chain is IMP cyclohydrolase (202 aa).

This sequence belongs to the archaeal IMP cyclohydrolase family.

The enzyme catalyses IMP + H2O = 5-formamido-1-(5-phospho-D-ribosyl)imidazole-4-carboxamide. It functions in the pathway purine metabolism; IMP biosynthesis via de novo pathway; IMP from 5-formamido-1-(5-phospho-D-ribosyl)imidazole-4-carboxamide: step 1/1. In terms of biological role, catalyzes the cyclization of 5-formylamidoimidazole-4-carboxamide ribonucleotide to IMP. The polypeptide is IMP cyclohydrolase (purO) (Methanocaldococcus jannaschii (strain ATCC 43067 / DSM 2661 / JAL-1 / JCM 10045 / NBRC 100440) (Methanococcus jannaschii)).